The chain runs to 849 residues: G-type lectin S-receptor-like serine/threonine-protein kinase B120 (849 aa).

Residues M1–A25 form the signal peptide. The 128-residue stretch at A26–F153 folds into the Bulb-type lectin domain. Over A26–K438 the chain is Extracellular. N-linked (GlcNAc...) asparagine glycans are attached at residues N110, N191, N210, N230, N273, and N282. Positions P295 to G332 constitute an EGF-like; atypical domain. 2 disulfide bridges follow: C299–C311 and C305–C320. 3 N-linked (GlcNAc...) asparagine glycosylation sites follow: N333, N349, and N388. The 82-residue stretch at C346–A427 folds into the PAN domain. Disulfide bonds link C381–C402 and C385–C391. A helical transmembrane segment spans residues I439–L459. At W460–R849 the chain is on the cytoplasmic side. Residues F529–F814 enclose the Protein kinase domain. ATP-binding positions include L535 to V543 and K557. A Phosphoserine modification is found at S563. The caM-binding stretch occupies residues T618 to I635. The active-site Proton acceptor is the D654. Phosphoserine occurs at positions 658 and 671. T688 carries the phosphothreonine modification. S732 and S837 each carry phosphoserine. The residue at position 844 (T844) is a Phosphothreonine.

This sequence belongs to the protein kinase superfamily. Ser/Thr protein kinase family.

Its subcellular location is the cell membrane. The enzyme catalyses L-seryl-[protein] + ATP = O-phospho-L-seryl-[protein] + ADP + H(+). It catalyses the reaction L-threonyl-[protein] + ATP = O-phospho-L-threonyl-[protein] + ADP + H(+). This chain is G-type lectin S-receptor-like serine/threonine-protein kinase B120 (B120), found in Arabidopsis thaliana (Mouse-ear cress).